A 294-amino-acid polypeptide reads, in one-letter code: Large ribosomal subunit protein uL2 (294 aa).

Disordered regions lie at residues 1-37 (MGIR…RPEK) and 228-294 (GSVM…RAAQ). The span at 10–22 (TPSTRHMTVSNFE) shows a compositional bias: polar residues. A compositionally biased stretch (basic and acidic residues) spans 23–37 (ELSRDENGKRPRPEK). Over residues 264 to 285 (KTRKRNKPSNKFIVRGRRRGGR) the composition is skewed to basic residues.

This sequence belongs to the universal ribosomal protein uL2 family. In terms of assembly, part of the 50S ribosomal subunit. Forms a bridge to the 30S subunit in the 70S ribosome.

Functionally, one of the primary rRNA binding proteins. Required for association of the 30S and 50S subunits to form the 70S ribosome, for tRNA binding and peptide bond formation. It has been suggested to have peptidyltransferase activity; this is somewhat controversial. Makes several contacts with the 16S rRNA in the 70S ribosome. The protein is Large ribosomal subunit protein uL2 of Synechococcus sp. (strain JA-3-3Ab) (Cyanobacteria bacterium Yellowstone A-Prime).